The sequence spans 213 residues: Amelogenin, X isoform (213 aa).

A signal peptide spans 1–16 (MGTWILFACLLGAAFS). Phosphoserine is present on Ser32. Low complexity-rich tracts occupy residues 96 to 105 (VPQQPMMPVP) and 114 to 160 (QHHQ…QPLQ). Residues 96 to 213 (VPQQPMMPVP…TDKTKREEVD (118 aa)) form a disordered region. Positions 161–194 (PLQPQPPVHPIQPLPPQPPLPPIFPMQPLPPMLP) are enriched in pro residues.

Belongs to the amelogenin family. In terms of assembly, interacts with KRT5. In terms of processing, phosphorylated by FAM20C in vitro.

It is found in the secreted. Its subcellular location is the extracellular space. It localises to the extracellular matrix. Plays a role in the biomineralization of teeth. Seems to regulate the formation of crystallites during the secretory stage of tooth enamel development. Thought to play a major role in the structural organization and mineralization of developing enamel. In Bos taurus (Bovine), this protein is Amelogenin, X isoform (AMELX).